The following is a 596-amino-acid chain: Elongation factor 4 (596 aa).

Residues 2–184 form the tr-type G domain; sequence KHIRNFSIIA…VIVAQIPSPE (183 aa). GTP-binding positions include 14–19 and 131–134; these read DHGKST and NKID.

This sequence belongs to the TRAFAC class translation factor GTPase superfamily. Classic translation factor GTPase family. LepA subfamily.

The protein localises to the cell inner membrane. The enzyme catalyses GTP + H2O = GDP + phosphate + H(+). Its function is as follows. Required for accurate and efficient protein synthesis under certain stress conditions. May act as a fidelity factor of the translation reaction, by catalyzing a one-codon backward translocation of tRNAs on improperly translocated ribosomes. Back-translocation proceeds from a post-translocation (POST) complex to a pre-translocation (PRE) complex, thus giving elongation factor G a second chance to translocate the tRNAs correctly. Binds to ribosomes in a GTP-dependent manner. This Shewanella sediminis (strain HAW-EB3) protein is Elongation factor 4.